The sequence spans 294 residues: UDP-3-O-acyl-N-acetylglucosamine deacetylase (294 aa).

The Zn(2+) site is built by histidine 75, histidine 232, and aspartate 236. The active-site Proton donor is histidine 259.

Belongs to the LpxC family. It depends on Zn(2+) as a cofactor.

It catalyses the reaction a UDP-3-O-[(3R)-3-hydroxyacyl]-N-acetyl-alpha-D-glucosamine + H2O = a UDP-3-O-[(3R)-3-hydroxyacyl]-alpha-D-glucosamine + acetate. It participates in glycolipid biosynthesis; lipid IV(A) biosynthesis; lipid IV(A) from (3R)-3-hydroxytetradecanoyl-[acyl-carrier-protein] and UDP-N-acetyl-alpha-D-glucosamine: step 2/6. In terms of biological role, catalyzes the hydrolysis of UDP-3-O-myristoyl-N-acetylglucosamine to form UDP-3-O-myristoylglucosamine and acetate, the committed step in lipid A biosynthesis. The sequence is that of UDP-3-O-acyl-N-acetylglucosamine deacetylase from Sulfurovum sp. (strain NBC37-1).